Consider the following 254-residue polypeptide: Uracil-DNA glycosylase (254 aa).

D78 serves as the catalytic Proton acceptor.

The protein belongs to the uracil-DNA glycosylase (UDG) superfamily. UNG family.

It localises to the cytoplasm. The catalysed reaction is Hydrolyzes single-stranded DNA or mismatched double-stranded DNA and polynucleotides, releasing free uracil.. Excises uracil residues from the DNA which can arise as a result of misincorporation of dUMP residues by DNA polymerase or due to deamination of cytosine. The sequence is that of Uracil-DNA glycosylase from Bordetella petrii (strain ATCC BAA-461 / DSM 12804 / CCUG 43448).